Reading from the N-terminus, the 611-residue chain is Dihydroxy-acid dehydratase (611 aa).

D81 provides a ligand contact to Mg(2+). C122 serves as a coordination point for [2Fe-2S] cluster. Mg(2+) is bound by residues D123 and K124. K124 is modified (N6-carboxylysine). C195 provides a ligand contact to [2Fe-2S] cluster. E491 provides a ligand contact to Mg(2+). Residue S517 is the Proton acceptor of the active site.

This sequence belongs to the IlvD/Edd family. In terms of assembly, homodimer. Requires [2Fe-2S] cluster as cofactor. Mg(2+) serves as cofactor.

The enzyme catalyses (2R)-2,3-dihydroxy-3-methylbutanoate = 3-methyl-2-oxobutanoate + H2O. It carries out the reaction (2R,3R)-2,3-dihydroxy-3-methylpentanoate = (S)-3-methyl-2-oxopentanoate + H2O. The protein operates within amino-acid biosynthesis; L-isoleucine biosynthesis; L-isoleucine from 2-oxobutanoate: step 3/4. It functions in the pathway amino-acid biosynthesis; L-valine biosynthesis; L-valine from pyruvate: step 3/4. Functionally, functions in the biosynthesis of branched-chain amino acids. Catalyzes the dehydration of (2R,3R)-2,3-dihydroxy-3-methylpentanoate (2,3-dihydroxy-3-methylvalerate) into 2-oxo-3-methylpentanoate (2-oxo-3-methylvalerate) and of (2R)-2,3-dihydroxy-3-methylbutanoate (2,3-dihydroxyisovalerate) into 2-oxo-3-methylbutanoate (2-oxoisovalerate), the penultimate precursor to L-isoleucine and L-valine, respectively. In Brucella anthropi (strain ATCC 49188 / DSM 6882 / CCUG 24695 / JCM 21032 / LMG 3331 / NBRC 15819 / NCTC 12168 / Alc 37) (Ochrobactrum anthropi), this protein is Dihydroxy-acid dehydratase.